The primary structure comprises 267 residues: Alkaline ceramidase 3 (267 aa).

Topologically, residues 1–33 (MAPAVDRKGYWGPTTSTLDWCEENYVVTLFVAE) are cytoplasmic. Residues Asp19, Trp20, Glu22, Asn24, and Glu33 each contribute to the Ca(2+) site. The chain crosses the membrane as a helical span at residues 34-55 (FWNTVSNLIMIIPPIFGAIQGI). Residues 56-61 (RDRLEK) lie on the Lumenal side of the membrane. A helical membrane pass occupies residues 62-82 (RYIAAYLALTVVGMGSWCFHM). Zn(2+) is bound at residue His81. Residues 83–87 (TLKYE) are Cytoplasmic-facing. The chain crosses the membrane as a helical span at residues 88 to 108 (MQLLDELPMIYSCCIFVYCMF). Topologically, residues 109 to 118 (ECFKTKSSIN) are lumenal. The helical transmembrane segment at 119 to 139 (YHLLFTLFLYSLTVTTIYLKV) threads the bilayer. Topologically, residues 140–141 (KE) are cytoplasmic. A helical transmembrane segment spans residues 142-162 (PIFHQVMYGMLVFTLVLRSIY). Residues 163–173 (IVTWVYPWLRG) are Lumenal-facing. The helical transmembrane segment at 174–194 (LGYTSLTVFLLGFLLWNIDNI) threads the bilayer. The Cytoplasmic segment spans residues 195–215 (FCDSLRNFRKRVPPVLGVTTQ). The chain crosses the membrane as a helical span at residues 216–236 (FHAWWHILTGLGSYLHILFSL). Residues His217 and His221 each coordinate Zn(2+). The Lumenal portion of the chain corresponds to 237–267 (YTRTLYLRYRPKVKFLFGIWPAVMFEPQRKH).

The protein belongs to the alkaline ceramidase family. Zn(2+) is required as a cofactor. Up-regulated with age in cerebeLlum and cerebrum.

It localises to the endoplasmic reticulum membrane. Its subcellular location is the golgi apparatus membrane. It carries out the reaction an N-acyl-(4R)-4-hydroxysphinganine + H2O = (4R)-hydroxysphinganine + a fatty acid. The enzyme catalyses N-(5Z,8Z,11Z,14Z-eicosatetraenoyl)-sphing-4-enine + H2O = sphing-4-enine + (5Z,8Z,11Z,14Z)-eicosatetraenoate. It catalyses the reaction N-(5Z,8Z,11Z,14Z-eicosatetraenoyl)-sphinganine + H2O = sphinganine + (5Z,8Z,11Z,14Z)-eicosatetraenoate. The catalysed reaction is N-(5Z,8Z,11Z,14Z-eicosatetraenoyl)-(4R)-hydroxysphinganine + H2O = (4R)-hydroxysphinganine + (5Z,8Z,11Z,14Z)-eicosatetraenoate. It carries out the reaction N-(11Z-eicosenoyl)-sphing-4-enine + H2O = (11Z)-eicosenoate + sphing-4-enine. The enzyme catalyses N-(11Z-eicosenoyl)-sphinganine + H2O = (11Z)-eicosenoate + sphinganine. It catalyses the reaction N-(11Z-eicosenoyl)-(4R)-hydroxysphinganine + H2O = (11Z)-eicosenoate + (4R)-hydroxysphinganine. The catalysed reaction is N-(9Z-octadecenoyl)-sphing-4-enine + H2O = sphing-4-enine + (9Z)-octadecenoate. It carries out the reaction N-(9Z-octadecenoyl)-sphinganine + H2O = sphinganine + (9Z)-octadecenoate. The enzyme catalyses N-(9Z-octadecenoyl)-(4R)-hydroxysphinganine + H2O = (4R)-hydroxysphinganine + (9Z)-octadecenoate. It catalyses the reaction an N-acylsphing-4-enine + H2O = sphing-4-enine + a fatty acid. The catalysed reaction is an N-acylsphinganine + H2O = sphinganine + a fatty acid. The protein operates within lipid metabolism; sphingolipid metabolism. Activated by Ca(2+) and inhibited by Zn(2+). Endoplasmic reticulum and Golgi ceramidase that catalyzes the hydrolysis of unsaturated long-chain C18:1-, C20:1- and C20:4-ceramides, dihydroceramides and phytoceramides into sphingoid bases like sphingosine and free fatty acids at alkaline pH. Ceramides, sphingosine, and its phosphorylated form sphingosine-1-phosphate are bioactive lipids that mediate cellular signaling pathways regulating several biological processes including cell proliferation, apoptosis and differentiation. Controls the generation of sphingosine in erythrocytes, and thereby sphingosine-1-phosphate in plasma. Through the regulation of ceramides and sphingosine-1-phosphate homeostasis in the brain may play a role in neurons survival and function. By regulating the levels of pro-inflammatory ceramides in immune cells and tissues, may modulate the inflammatory response. This chain is Alkaline ceramidase 3 (Acer3), found in Mus musculus (Mouse).